The primary structure comprises 166 residues: 3-isopropylmalate dehydratase small subunit (166 aa).

It belongs to the LeuD family. LeuD type 2 subfamily. Heterodimer of LeuC and LeuD.

It catalyses the reaction (2R,3S)-3-isopropylmalate = (2S)-2-isopropylmalate. Its pathway is amino-acid biosynthesis; L-leucine biosynthesis; L-leucine from 3-methyl-2-oxobutanoate: step 2/4. In terms of biological role, catalyzes the isomerization between 2-isopropylmalate and 3-isopropylmalate, via the formation of 2-isopropylmaleate. This chain is 3-isopropylmalate dehydratase small subunit, found in Nautilia profundicola (strain ATCC BAA-1463 / DSM 18972 / AmH).